Here is a 427-residue protein sequence, read N- to C-terminus: Histidinol dehydrogenase (427 aa).

3 residues coordinate NAD(+): Tyr125, Gln186, and Asn209. The substrate site is built by Ser234, Gln256, and His259. Residues Gln256 and His259 each contribute to the Zn(2+) site. Active-site proton acceptor residues include Glu325 and His326. His326, Asp359, Glu413, and His419 together coordinate substrate. Asp359 provides a ligand contact to Zn(2+). His419 is a binding site for Zn(2+).

Belongs to the histidinol dehydrogenase family. Zn(2+) serves as cofactor.

The catalysed reaction is L-histidinol + 2 NAD(+) + H2O = L-histidine + 2 NADH + 3 H(+). The protein operates within amino-acid biosynthesis; L-histidine biosynthesis; L-histidine from 5-phospho-alpha-D-ribose 1-diphosphate: step 9/9. Catalyzes the sequential NAD-dependent oxidations of L-histidinol to L-histidinaldehyde and then to L-histidine. This is Histidinol dehydrogenase from Leptospira interrogans serogroup Icterohaemorrhagiae serovar Lai (strain 56601).